We begin with the raw amino-acid sequence, 175 residues long: Rubredoxin-1 (175 aa).

Rubredoxin-like domains lie at 1–53 and 119–170; these read MARY…FVLI and FLKW…YVLY. Fe cation contacts are provided by C6, C9, C39, C42, C124, C127, C157, and C160.

The protein belongs to the rubredoxin family. Fe(3+) serves as cofactor.

It localises to the cytoplasm. It participates in hydrocarbon metabolism; alkane degradation. Its function is as follows. Involved in the hydrocarbon hydroxylating system, which transfers electrons from NADH to rubredoxin reductase and then through rubredoxin to alkane 1 monooxygenase. The sequence is that of Rubredoxin-1 (alkG) from Pseudomonas putida (Arthrobacter siderocapsulatus).